We begin with the raw amino-acid sequence, 166 residues long: Large ribosomal subunit protein uL10 (166 aa).

This sequence belongs to the universal ribosomal protein uL10 family. Part of the ribosomal stalk of the 50S ribosomal subunit. The N-terminus interacts with L11 and the large rRNA to form the base of the stalk. The C-terminus forms an elongated spine to which L12 dimers bind in a sequential fashion forming a multimeric L10(L12)X complex.

Forms part of the ribosomal stalk, playing a central role in the interaction of the ribosome with GTP-bound translation factors. The polypeptide is Large ribosomal subunit protein uL10 (Shewanella woodyi (strain ATCC 51908 / MS32)).